The chain runs to 315 residues: PIH1 domain-containing protein 2 (315 aa).

This sequence belongs to the PIH1 family.

This is PIH1 domain-containing protein 2 (PIH1D2) from Homo sapiens (Human).